A 395-amino-acid chain; its full sequence is Enoyl-[acyl-carrier-protein] reductase [NADH] (395 aa).

Residues 48-53 (GASTGY), 74-75 (FE), 111-112 (DA), and 139-140 (LA) contribute to the NAD(+) site. Residue tyrosine 225 participates in substrate binding. Tyrosine 235 acts as the Proton donor in catalysis. NAD(+)-binding positions include lysine 244 and 273-275 (LVT).

This sequence belongs to the TER reductase family. As to quaternary structure, monomer.

It carries out the reaction a 2,3-saturated acyl-[ACP] + NAD(+) = a (2E)-enoyl-[ACP] + NADH + H(+). The protein operates within lipid metabolism; fatty acid biosynthesis. In terms of biological role, involved in the final reduction of the elongation cycle of fatty acid synthesis (FAS II). Catalyzes the reduction of a carbon-carbon double bond in an enoyl moiety that is covalently linked to an acyl carrier protein (ACP). The chain is Enoyl-[acyl-carrier-protein] reductase [NADH] from Saccharophagus degradans (strain 2-40 / ATCC 43961 / DSM 17024).